The chain runs to 21 residues: Alpha-aminoadipic semialdehyde dehydrogenase (21 aa).

The protein belongs to the aldehyde dehydrogenase family. In terms of assembly, homotetramer.

The catalysed reaction is (S)-2-amino-6-oxohexanoate + NADP(+) + H2O = L-2-aminoadipate + NADPH + 2 H(+). It carries out the reaction (S)-2-amino-6-oxohexanoate + NAD(+) + H2O = L-2-aminoadipate + NADH + 2 H(+). The chain is Alpha-aminoadipic semialdehyde dehydrogenase (aldh7a1) from Ctenopharyngodon idella (Grass carp).